Consider the following 927-residue polypeptide: Tubulin monoglycylase TTLL3 (927 aa).

A compositionally biased stretch (polar residues) spans 35–47 (RSQPSELRTNFSS). Disordered stretches follow at residues 35–113 (RSQP…PQPV) and 194–227 (HPPGTALPAPQKDLDSSMLGDSDATEDEDEEENE). Over residues 216–226 (DATEDEDEEEN) the composition is skewed to acidic residues. One can recognise a TTL domain in the interval 345–702 (VLKLVVKLEE…DRRLDRSCDT (358 aa)). Residues Lys476, 482–483 (RG), 514–517 (QKYI), 527–529 (KFD), and 571–572 (CN) contribute to the ATP site. Position 482 (Arg482) interacts with a protein. Mg(2+) is bound by residues Asp649, Glu662, and Asn664. Glu662 serves as a coordination point for ATP. Disordered stretches follow at residues 735–799 (VPVG…SGKG) and 897–927 (EEGHRQRAAPRPSSAPGKGLSSTEPCSKTET). Residues 752-769 (LTQQGSGESKDSGSPTHR) are compositionally biased toward polar residues. The segment covering 776 to 788 (ARAESLEHTEKPE) has biased composition (basic and acidic residues). Polar residues predominate over residues 916-927 (LSSTEPCSKTET).

It depends on Mg(2+) as a cofactor. In terms of tissue distribution, highly expressed in brain and testis. Expressed in heart, kidney, liver, lung, muscle, spleen, trachea and colon. Expressed in sperm flagellum. In the brain, specifically expressed in ependymal cilia.

The protein localises to the cytoplasm. It localises to the cytoskeleton. It is found in the cell projection. Its subcellular location is the cilium. The protein resides in the cilium axoneme. The protein localises to the flagellum axoneme. The enzyme catalyses L-glutamyl-[protein] + glycine + ATP = glycyl-L-glutamyl-[protein] + ADP + phosphate + H(+). Monoglycylase which modifies alpha- and beta-tubulin, adding a single glycine on the gamma-carboxyl groups of specific glutamate residues to generate monoglycine side chains within the C-terminal tail of tubulin. Not involved in elongation step of the polyglycylation reaction. Preferentially glycylates a beta-tail peptide over the alpha-tail, although shifts its preference toward alpha-tail as beta-tail glutamylation increases. Competes with polyglutamylases for modification site on beta-tubulin substrate, thereby creating an anticorrelation between glycylation and glutamylation reactions. Together with TTLL8, mediates microtubule glycylation of primary and motile cilia, which is essential for their stability and maintenance. Involved in microtubule glycylation of primary cilia in colon which controls cell proliferation of epithelial cells and plays an essential role in colon cancer development. Together with TTLL8, glycylates sperm flagella which regulates axonemal dynein motor activity, thereby controlling flagellar beat, directional sperm swimming and male fertility. The sequence is that of Tubulin monoglycylase TTLL3 from Mus musculus (Mouse).